The sequence spans 668 residues: Fructose-1,6-bisphosphatase class 3 (668 aa).

It belongs to the FBPase class 3 family. It depends on Mn(2+) as a cofactor.

The catalysed reaction is beta-D-fructose 1,6-bisphosphate + H2O = beta-D-fructose 6-phosphate + phosphate. Its pathway is carbohydrate biosynthesis; gluconeogenesis. This Clostridium botulinum (strain Okra / Type B1) protein is Fructose-1,6-bisphosphatase class 3.